An 85-amino-acid chain; its full sequence is Polcalcin Aln g 4 (85 aa).

2 EF-hand domains span residues 7–42 (QDQA…LGSV) and 45–77 (DEVK…NRGL). 9 residues coordinate Ca(2+): D20, N22, D24, K26, E31, D55, D57, D59, and E66.

This is Polcalcin Aln g 4 from Alnus glutinosa (European alder).